We begin with the raw amino-acid sequence, 667 residues long: Alpha-1,4-glucan:maltose-1-phosphate maltosyltransferase (667 aa).

Positions 261, 321, and 356 each coordinate alpha-maltose 1-phosphate. Asp-392 functions as the Nucleophile in the catalytic mechanism. Asn-393 is an alpha-maltose 1-phosphate binding site. Glu-421 acts as the Proton donor in catalysis. 534 to 535 (KY) is an alpha-maltose 1-phosphate binding site.

It belongs to the glycosyl hydrolase 13 family. GlgE subfamily. In terms of assembly, homodimer.

It carries out the reaction alpha-maltose 1-phosphate + [(1-&gt;4)-alpha-D-glucosyl](n) = [(1-&gt;4)-alpha-D-glucosyl](n+2) + phosphate. In terms of biological role, maltosyltransferase that uses maltose 1-phosphate (M1P) as the sugar donor to elongate linear or branched alpha-(1-&gt;4)-glucans. Is involved in a branched alpha-glucan biosynthetic pathway from trehalose, together with TreS, Mak and GlgB. The protein is Alpha-1,4-glucan:maltose-1-phosphate maltosyltransferase of Methylacidiphilum infernorum (isolate V4) (Methylokorus infernorum (strain V4)).